The following is a 690-amino-acid chain: UvrABC system protein B (690 aa).

The region spanning 30–188 (QGVMDGQTNQ…QELISLHFVR (159 aa)) is the Helicase ATP-binding domain. ATP is bound at residue 43–50 (GVTGSGKT). The Beta-hairpin signature appears at 96–119 (YYDFYQPEAYIPTMDKYIAKDLKI). Residues 435 to 601 (QIDDLLEEIR…SIVKSVDQVL (167 aa)) enclose the Helicase C-terminal domain. The region spanning 641 to 676 (YAMAEELRLEMQEAAESMEFEKAAYLRDEVTKLEDA) is the UVR domain.

This sequence belongs to the UvrB family. Forms a heterotetramer with UvrA during the search for lesions. Interacts with UvrC in an incision complex.

The protein localises to the cytoplasm. The UvrABC repair system catalyzes the recognition and processing of DNA lesions. A damage recognition complex composed of 2 UvrA and 2 UvrB subunits scans DNA for abnormalities. Upon binding of the UvrA(2)B(2) complex to a putative damaged site, the DNA wraps around one UvrB monomer. DNA wrap is dependent on ATP binding by UvrB and probably causes local melting of the DNA helix, facilitating insertion of UvrB beta-hairpin between the DNA strands. Then UvrB probes one DNA strand for the presence of a lesion. If a lesion is found the UvrA subunits dissociate and the UvrB-DNA preincision complex is formed. This complex is subsequently bound by UvrC and the second UvrB is released. If no lesion is found, the DNA wraps around the other UvrB subunit that will check the other stand for damage. The sequence is that of UvrABC system protein B from Chlorobium phaeobacteroides (strain BS1).